We begin with the raw amino-acid sequence, 638 residues long: MALSRGLPRELAEAVSGGRVLVVGAGGIGCELLKNLVLTGFSHIDLIDLDTIDVSNLNRQFLFQKKHVGRSKAQVAKESVLQFHPQANIEAHHDSIMNPDYNVEFFRQFILVMNALDNRAARNHVNRMCLAADVPLIESGTAGYLGQVTTIKKGVTECYECHPKPTQRTFPGCTIRNTPSEPIHCIVWAKYLFNQLFGEEDADQEVSPDRADPEAAWEPTEAEARARASNEDGDIKRISTKEWAKSTGYDPVKLFTKLFKDDIRYLLTMDKLWRKRKPPVPLDWAEVQSQGEANADQQNEPQLGLKDQQVLDVKSYASLFSKSIETLRVHLAEKGDGAELIWDKDDPPAMDFVTSAANLRMHIFSMNMKSRFDIKSMAGNIIPAIATTNAVIAGLIVLEGLKILSGKIDQCRTIFLNKQPNPRKKLLVPCALDPPNTNCYVCASKPEVTVRLNVHKVTVLTLQDKIVKEKFAMVAPDVQIEDGKGTILISSEEGETEANNPKKLSDFGIRNGSRLQADDFLQDYTLLINILHSEDLGKDVEFEVVGDSPEKVGPKQAEDAAKSIANGSDDGAQPSTSTAQEQDDVLIVDSDEEGPSNSTDCSGDDKARKRKLEENEAASTKKCRLEQMEDPDDVIALD.

ATP-binding positions include 24 to 29, aspartate 48, 56 to 59, lysine 72, 95 to 96, and 117 to 122; these read GAGGIG, NLNR, SI, and DNRAAR. Positions 158 and 161 each coordinate Zn(2+). Lysine 164 is covalently cross-linked (Glycyl lysine isopeptide (Lys-Gly) (interchain with G-Cter in SUMO1)). Cysteine 173 functions as the Glycyl thioester intermediate in the catalytic mechanism. Residue lysine 190 forms a Glycyl lysine isopeptide (Lys-Gly) (interchain with G-Cter in SUMO) linkage. Positions 202–233 are disordered; it reads ADQEVSPDRADPEAAWEPTEAEARARASNEDG. Serine 207 is subject to Phosphoserine. The span at 222–233 shows a compositional bias: basic and acidic residues; that stretch reads AEARARASNEDG. Lysine 236 participates in a covalent cross-link: Glycyl lysine isopeptide (Lys-Gly) (interchain with G-Cter in SUMO1); alternate. Residues lysine 236 and lysine 257 each participate in a glycyl lysine isopeptide (Lys-Gly) (interchain with G-Cter in SUMO2); alternate cross-link. Glycyl lysine isopeptide (Lys-Gly) (interchain with G-Cter in SUMO); alternate cross-links involve residues lysine 257 and lysine 271. At lysine 271 the chain carries N6-acetyllysine; alternate. Lysine 275 is covalently cross-linked (Glycyl lysine isopeptide (Lys-Gly) (interchain with G-Cter in SUMO)). Lysine 369 is covalently cross-linked (Glycyl lysine isopeptide (Lys-Gly) (interchain with G-Cter in SUMO2)). Residue lysine 418 forms a Glycyl lysine isopeptide (Lys-Gly) (interchain with G-Cter in SUMO1); alternate linkage. Lysine 418 participates in a covalent cross-link: Glycyl lysine isopeptide (Lys-Gly) (interchain with G-Cter in SUMO2); alternate. Residues cysteine 439 and cysteine 442 each contribute to the Zn(2+) site. A Phosphoserine modification is found at serine 505. Lysine 538 participates in a covalent cross-link: Glycyl lysine isopeptide (Lys-Gly) (interchain with G-Cter in SUMO2). Phosphoserine occurs at positions 548 and 590. Basic and acidic residues predominate over residues 548–561; sequence SPEKVGPKQAEDAA. The tract at residues 548–638 is disordered; sequence SPEKVGPKQA…EDPDDVIALD (91 aa). Residues 581 to 594 show a composition bias toward acidic residues; it reads EQDDVLIVDSDEEG. Positions 603–614 are enriched in basic and acidic residues; it reads GDDKARKRKLEE. Lysine 609 participates in a covalent cross-link: Glycyl lysine isopeptide (Lys-Gly) (interchain with G-Cter in SUMO). A Glycyl lysine isopeptide (Lys-Gly) (interchain with G-Cter in SUMO); alternate cross-link involves residue lysine 611. At lysine 611 the chain carries N6-acetyllysine; alternate. Lysine 621 participates in a covalent cross-link: Glycyl lysine isopeptide (Lys-Gly) (interchain with G-Cter in SUMO). Residues 628–638 show a composition bias toward acidic residues; sequence MEDPDDVIALD.

This sequence belongs to the ubiquitin-activating E1 family. As to quaternary structure, heterodimer of SAE1 and UBA2/SAE2. The heterodimer corresponds to the two domains that are encoded on a single polypeptide chain in ubiquitin-activating enzyme E1. Interacts with UBE2I. Post-translationally, sumoylated with SUMO1 and SUMO2/3 and by UBC9. Sumoylation at Lys-236 inhibits enzymatic activity. Sumoylation at the C-terminal lysine cluster plays an essential role in nuclear trafficking. In terms of tissue distribution, broadly expressed, with highest levels in testis.

It is found in the cytoplasm. It localises to the nucleus. It functions in the pathway protein modification; protein sumoylation. Its function is as follows. The heterodimer acts as an E1 ligase for SUMO1, SUMO2, SUMO3, and probably SUMO4. It mediates ATP-dependent activation of SUMO proteins followed by formation of a thioester bond between a SUMO protein and a conserved active site cysteine residue on UBA2/SAE2. In Mus musculus (Mouse), this protein is SUMO-activating enzyme subunit 2 (Uba2).